The following is a 352-amino-acid chain: Protein TIFY 6B (352 aa).

The interval 1-71 (MERDFLGLGS…KSGNYHLPHS (71 aa)) is disordered. Positions 17 to 26 (VKEETSESSR) are enriched in basic and acidic residues. The span at 34 to 54 (MNWSFSNKVSASSSQFLSFRP) shows a compositional bias: polar residues. Positions 172 to 207 (PIGSPAQLTIFYAGSVCVYDDISPEKAKAIMLLAGN) constitute a Tify domain. A Jas motif is present at residues 302–326 (PLARKASLARFLEKRKERVTSVSPY). Positions 304 to 311 (ARKASLAR) match the Nuclear localization signal motif.

Belongs to the TIFY/JAZ family. As to quaternary structure, homo- and heterodimer. Interacts with COI1, MYC2, MYC3, MYC4, TIFY10A/JAZ1, TIFY10B/JAZ2, TIFY6A/JAZ4, TIFY5A/JAZ8, TIFY7/JAZ9, TIFY9/JAZ10 and TIFY3A/JAZ11. Interacts (via TIFY domain) with AFPH2/NINJA. Ubiquitinated. Targeted for degradation by the SCF(COI1) E3 ubiquitin ligase-proteasome pathway during jasmonate signaling. In terms of tissue distribution, srtongly expressed in root tips.

The protein resides in the nucleus. Functionally, repressor of jasmonate responses. Jasmonoyl-isoleucine (JA-Ile) specifically promotes COI1-TIFY6B/JAZ3 interaction. Acts as a negative regulator of MYC2 function. Feed-back regulated by MYC2. In Arabidopsis thaliana (Mouse-ear cress), this protein is Protein TIFY 6B (TIFY6B).